A 137-amino-acid polypeptide reads, in one-letter code: Large ribosomal subunit protein uL16 (137 aa).

A compositionally biased stretch (basic residues) spans Met1–Arg16. A disordered region spans residues Met1–Gln22.

It belongs to the universal ribosomal protein uL16 family. Part of the 50S ribosomal subunit.

Binds 23S rRNA and is also seen to make contacts with the A and possibly P site tRNAs. The protein is Large ribosomal subunit protein uL16 of Idiomarina loihiensis (strain ATCC BAA-735 / DSM 15497 / L2-TR).